The sequence spans 202 residues: V-type ATP synthase subunit D (202 aa).

It belongs to the V-ATPase D subunit family.

Its function is as follows. Produces ATP from ADP in the presence of a proton gradient across the membrane. The polypeptide is V-type ATP synthase subunit D (atpD) (Borreliella burgdorferi (strain ATCC 35210 / DSM 4680 / CIP 102532 / B31) (Borrelia burgdorferi)).